The following is a 1577-amino-acid chain: Dynamin-binding protein (1577 aa).

Methionine 1 carries the N-acetylmethionine modification. SH3 domains lie at 2–61, 66–126, and 145–204; these read EPGS…IVTI, EGER…ELCL, and YSMG…LLGP. The segment at 209–242 is disordered; the sequence is DESVNAGSGDDSTLNDEVDVSPEEVESEGDEDDQ. Positions 221-242 are enriched in acidic residues; that stretch reads TLNDEVDVSPEEVESEGDEDDQ. The SH3 4 domain maps to 243 to 302; sequence QAGTYGIALYRFQALESNELDFEVGDKIRILGTLEDGWLEGRLKGKTGIFPHRFVKLCPS. 2 disordered regions span residues 307–361 and 375–437; these read ETMA…EEPL and GQDE…SRQC. Residues 400–410 are compositionally biased toward polar residues; the sequence is PDLSQEVNGIS. At serine 494 the chain carries Phosphoserine. Disordered stretches follow at residues 519-547 and 590-681; these read PERPKRRPGLPDKEPATEITPASQGDNLD and RGSS…SEYT. The span at 617-626 shows a compositional bias: low complexity; sequence TPTSTSPHLL. The segment covering 632 to 651 has biased composition (pro residues); that stretch reads KPGPPLVVRPSRPAPLPPPT. Residues 652 to 662 are compositionally biased toward polar residues; sequence QQRLNTASPKP. A compositionally biased stretch (basic and acidic residues) spans 672 to 681; that stretch reads APEKEGSEYT. The residue at position 684 (serine 684) is a Phosphoserine. Positions 705–755 form a coiled coil; that stretch reads LDMHTRAQEELNLLLEEKQDESLRAETLETLKSYESTIQSLNLELQQLREM. In terms of domain architecture, DH spans 784-967; the sequence is KRAKVVAELL…KEINANINEY (184 aa). Residues 1008–1217 enclose the BAR domain; the sequence is LKHLTGFAPQ…LKASDREGNL (210 aa). Residues 1285 to 1348 form the SH3 5 domain; that stretch reads PPEKLFHVQR…YSSFLKPYNP (64 aa). Residues 1353-1375 are compositionally biased toward low complexity; the sequence is SDSSVVSHSSTESEHSGSSPSFH. 2 disordered regions span residues 1353–1381 and 1415–1510; these read SDSSVVSHSSTESEHSGSSPSFHRQNSSS and ETLG…LGSS. Composition is skewed to polar residues over residues 1418 to 1428 and 1484 to 1497; these read GVSSNTGNPET and DQGSDSIKGTSRAC. Residues 1513–1576 form the SH3 6 domain; that stretch reads EGNQVYFAIY…PSNYIRKTEY (64 aa).

Binds DNM1 via its N-terminal SH3 domains. The C-terminal SH3 domain binds a complex containing actin, tubulin, Hsp70 and actin-regulatory proteins, such as ENAH, EVL, WIRE, CR16, WAVE1 and NAP1L1. Interacts with FASLG. Interacts (via SH3 domain 6) with WASL. Interacts (via SH3 domain 6) interacts with ENAH. Interacts (via C-terminal domain) with TJP1; required for the apical cell-cell junction localization of DNMBP. As to expression, widely expressed.

Its subcellular location is the cytoplasm. The protein localises to the golgi apparatus. The protein resides in the golgi stack. It localises to the cytoskeleton. It is found in the synapse. Its subcellular location is the cell junction. Functionally, plays a critical role as a guanine nucleotide exchange factor (GEF) for CDC42 in several intracellular processes associated with the actin and microtubule cytoskeleton. Regulates the structure of apical junctions in epithelial cells. Participates in the normal lumenogenesis of epithelial cell cysts by regulating spindle orientation. Plays a role in ciliogenesis. May play a role in membrane trafficking between the cell surface and the Golgi. The sequence is that of Dynamin-binding protein from Rattus norvegicus (Rat).